A 1118-amino-acid chain; its full sequence is Protein argonaute 1B (1118 aa).

Disordered regions lie at residues 1–175 (MALQ…SRTV) and 188–246 (APMV…RFPL). Basic residues predominate over residues 10–24 (PHHHQVPIMVKKKRT). Over residues 25-35 (GSGSTGESSGE) the composition is skewed to low complexity. Gly residues-rich tracts occupy residues 54–92 (QHGGGRGWVPQHGGRGGGQYQGRGGHYQGRGGQGSHHPG), 100–110 (GRGGPGSHHPG), and 118–128 (GRGGSGSHHPG). Low complexity-rich tracts occupy residues 148–157 (RGGMPQPYYG) and 193–219 (PTPSGAGSSSQPAAEVSSGQVQQQFQQ). The segment covering 220 to 241 (LATRDQSSTSQAIQIAPPSSKS) has biased composition (polar residues). In terms of domain architecture, PAZ spans 457-570 (PVIDFVAQLL…LPMEVCKIVE (114 aa)). The region spanning 746–1067 (LLIVILPDNN…AAFRARFYME (322 aa)) is the Piwi domain.

This sequence belongs to the argonaute family. Ago subfamily.

In terms of biological role, probably involved in the RNA silencing pathway. May bind to short RNAs such as microRNAs (miRNAs) or short interfering RNAs (siRNAs), and represses the translation of mRNAs which are complementary to them. In Oryza sativa subsp. japonica (Rice), this protein is Protein argonaute 1B (AGO1B).